We begin with the raw amino-acid sequence, 140 residues long: MSAHSHEIEEGLSFQPRFDASGLVTCVATDVATGDVLMVAHMNDEALRKTIATGEAWYFSRSRNALWRKGETSGQTQRVVEMRTDCDQDAVWIRVEQIGAACHTGRRSCFYRKVEAEDGGAKLVFVDADRLFDPDAVYKK.

Aspartate 85 lines the Mg(2+) pocket. Position 86 (cysteine 86) interacts with Zn(2+). Mg(2+)-binding residues include aspartate 87 and aspartate 89. The Zn(2+) site is built by cysteine 102 and cysteine 109.

This sequence belongs to the PRA-CH family. Homodimer. It depends on Mg(2+) as a cofactor. Zn(2+) serves as cofactor.

The protein localises to the cytoplasm. The enzyme catalyses 1-(5-phospho-beta-D-ribosyl)-5'-AMP + H2O = 1-(5-phospho-beta-D-ribosyl)-5-[(5-phospho-beta-D-ribosylamino)methylideneamino]imidazole-4-carboxamide. It participates in amino-acid biosynthesis; L-histidine biosynthesis; L-histidine from 5-phospho-alpha-D-ribose 1-diphosphate: step 3/9. Its function is as follows. Catalyzes the hydrolysis of the adenine ring of phosphoribosyl-AMP. The polypeptide is Phosphoribosyl-AMP cyclohydrolase (Bradyrhizobium diazoefficiens (strain JCM 10833 / BCRC 13528 / IAM 13628 / NBRC 14792 / USDA 110)).